Consider the following 206-residue polypeptide: Ribosomal RNA large subunit methyltransferase E (206 aa).

Residues Gly-60, Trp-62, Asp-80, Asn-96, and Asp-121 each coordinate S-adenosyl-L-methionine. The Proton acceptor role is filled by Lys-161.

This sequence belongs to the class I-like SAM-binding methyltransferase superfamily. RNA methyltransferase RlmE family.

It localises to the cytoplasm. It carries out the reaction uridine(2552) in 23S rRNA + S-adenosyl-L-methionine = 2'-O-methyluridine(2552) in 23S rRNA + S-adenosyl-L-homocysteine + H(+). In terms of biological role, specifically methylates the uridine in position 2552 of 23S rRNA at the 2'-O position of the ribose in the fully assembled 50S ribosomal subunit. The chain is Ribosomal RNA large subunit methyltransferase E from Francisella philomiragia subsp. philomiragia (strain ATCC 25017 / CCUG 19701 / FSC 153 / O#319-036).